The following is a 439-amino-acid chain: Ribosomal protein uS12 methylthiotransferase RimO (439 aa).

An MTTase N-terminal domain is found at 5-116; that stretch reads PTIAISHLGC…IVNVIERVEL (112 aa). Residues cysteine 14, cysteine 50, cysteine 79, cysteine 154, cysteine 158, and cysteine 161 each coordinate [4Fe-4S] cluster. The Radical SAM core domain maps to 140–369; it reads TTTEGVAYLR…MELQQPISQK (230 aa). The TRAM domain maps to 372 to 438; that stretch reads QQEVGKIVDV…TYDLYGQVVN (67 aa).

Belongs to the methylthiotransferase family. RimO subfamily. The cofactor is [4Fe-4S] cluster.

The protein localises to the cytoplasm. The enzyme catalyses L-aspartate(89)-[ribosomal protein uS12]-hydrogen + (sulfur carrier)-SH + AH2 + 2 S-adenosyl-L-methionine = 3-methylsulfanyl-L-aspartate(89)-[ribosomal protein uS12]-hydrogen + (sulfur carrier)-H + 5'-deoxyadenosine + L-methionine + A + S-adenosyl-L-homocysteine + 2 H(+). Its function is as follows. Catalyzes the methylthiolation of an aspartic acid residue of ribosomal protein uS12. This chain is Ribosomal protein uS12 methylthiotransferase RimO, found in Nostoc punctiforme (strain ATCC 29133 / PCC 73102).